The sequence spans 592 residues: MEEFDSKDISTSKDEDCVPLGGECHEDDINELVKEDEVDGEEETQKTKGTKRKAESILARKRKQGRLSLDQEEEEDASRESGGRIIEKEDAAAEQEKGAESEDARQEEADVLASSVSDAEPKSELPPSTQTKTGEETEETSSSNLVKVEELEKPKKAEEVKLTKSPLAGEEVRFLTQQGRLSGRTSEDEPRRSEGVQHATGEERRADTNTSSKNEAAGQKWKGQSAVDVSGDESKLRCCKEEYCIGTWNVRSMNPGKLDVVKQEMERINIDILGISELKWTGMGELNSDDHYIYYCGQQSLRRNGVALIVNKRVRNAIIGCNLKNDRMISVRFQGKPFNLTVIQVYAPTPYAEEGEVYRFYEDLQHLLEITPKIDVLFIIGDWNAKVGSQEIPGITGRFGLGMQNEAGRRLIEFCHHNRLVITNTLFQQPSRRLYTWTSPDGRYRDQIDYIICRQRWRSSVQSAKTRPGADCGSDHKLLIAKFRLKLKIIPKTTRPFRVTNEEDATNEEAKSVLKQNEKEKPEANVPSTVSSVPGGSGMTKEVGETSQEAKSVFKQDEKDKPQANVPSSVPSLPAGSGPEKCDLEKKKDCNN.

Positions 1 to 16 (MEEFDSKDISTSKDED) are enriched in basic and acidic residues. Disordered regions lie at residues 1-225 (MEEF…KGQS) and 499-592 (VTNE…DCNN). Residues 25-42 (HEDDINELVKEDEVDGEE) are compositionally biased toward acidic residues. Basic and acidic residues-rich tracts occupy residues 78–108 (SRES…RQEE) and 147–162 (KVEE…EVKL). The span at 175–184 (LTQQGRLSGR) shows a compositional bias: polar residues. Composition is skewed to basic and acidic residues over residues 185–207 (TSED…RRAD), 508–523 (EEAK…EKPE), 552–562 (SVFKQDEKDKP), and 580–592 (EKCD…DCNN). The interval 499 to 578 (VTNEEDATNE…SVPSLPAGSG (80 aa)) is hydrophilic.

Phosphorylated by CK2 (casein kinase II) in vitro. As to expression, expressed in liver and lung with higher expression in brain.

It localises to the cytoplasm. The protein resides in the nucleus. The chain is Craniofacial development protein 2 (CFDP2) from Bos taurus (Bovine).